The sequence spans 98 residues: MLSRLQELRKEEETLLRLKAALHDQLNRLKVEELALQSMISSRREGEMLPSQPAPEPSHDMLVHVDNEASINQTALELSTRSHVQEEEEEEEEEEEDS.

The interval 75-98 is disordered; the sequence is ALELSTRSHVQEEEEEEEEEEEDS. Positions 86–98 are enriched in acidic residues; that stretch reads EEEEEEEEEEEDS.

As to quaternary structure, part of the SNAPc complex composed of 5 subunits: SNAPC1, SNAPC2, SNAPC3, SNAPC4 and SNAPC5. SNAPC5 interacts with SNAPC4.

The protein resides in the nucleus. Part of the SNAPc complex required for the transcription of both RNA polymerase II and III small-nuclear RNA genes. Binds to the proximal sequence element (PSE), a non-TATA-box basal promoter element common to these 2 types of genes. Recruits TBP and BRF2 to the U6 snRNA TATA box. The sequence is that of snRNA-activating protein complex subunit 5 (SNAPC5) from Bos taurus (Bovine).